We begin with the raw amino-acid sequence, 342 residues long: RNA 3'-terminal phosphate cyclase (342 aa).

The protein belongs to the RNA 3'-terminal cyclase family. Type 1 subfamily.

It localises to the cytoplasm. The enzyme catalyses a 3'-end 3'-phospho-ribonucleotide-RNA + GTP = a 3'-end 2',3'-cyclophospho-ribonucleotide-RNA + GMP + diphosphate. Inhibited by GMP. Catalyzes the GTP-dependent conversion of 3'-phosphate to a 2',3'-cyclic phosphodiester at the end of RNA. The biological role of this enzyme is unknown but it is likely to function in some aspects of cellular RNA processing. In Pyrococcus furiosus (strain ATCC 43587 / DSM 3638 / JCM 8422 / Vc1), this protein is RNA 3'-terminal phosphate cyclase.